The sequence spans 503 residues: Probable cytosol aminopeptidase (503 aa).

Positions 270 and 275 each coordinate Mn(2+). Residue Lys-282 is part of the active site. Asp-293, Asp-352, and Glu-354 together coordinate Mn(2+). Arg-356 is an active-site residue.

Belongs to the peptidase M17 family. Requires Mn(2+) as cofactor.

The protein localises to the cytoplasm. It carries out the reaction Release of an N-terminal amino acid, Xaa-|-Yaa-, in which Xaa is preferably Leu, but may be other amino acids including Pro although not Arg or Lys, and Yaa may be Pro. Amino acid amides and methyl esters are also readily hydrolyzed, but rates on arylamides are exceedingly low.. The catalysed reaction is Release of an N-terminal amino acid, preferentially leucine, but not glutamic or aspartic acids.. Presumably involved in the processing and regular turnover of intracellular proteins. Catalyzes the removal of unsubstituted N-terminal amino acids from various peptides. The chain is Probable cytosol aminopeptidase from Pectobacterium atrosepticum (strain SCRI 1043 / ATCC BAA-672) (Erwinia carotovora subsp. atroseptica).